The primary structure comprises 303 residues: uncharacterized protein (303 aa).

The signal sequence occupies residues 1–24 (MNRIALVFLYSLFLFNLAIGRVES). Residue N116 is glycosylated (N-linked (GlcNAc...) asparagine). Residues 124 to 179 (FTRQQQKKSHDDDDDDDDSDSDESKEEEEKKKRDRKHRRDKRQAITQGSQNNTDPN) are disordered. The span at 135 to 149 (DDDDDDDSDSDESKE) shows a compositional bias: acidic residues. The segment covering 155–164 (KRDRKHRRDK) has biased composition (basic residues). A compositionally biased stretch (polar residues) spans 167 to 178 (AITQGSQNNTDP).

This is an uncharacterized protein from Caenorhabditis elegans.